The primary structure comprises 188 residues: Elongation factor P (188 aa).

Belongs to the elongation factor P family.

Its subcellular location is the cytoplasm. It participates in protein biosynthesis; polypeptide chain elongation. Involved in peptide bond synthesis. Stimulates efficient translation and peptide-bond synthesis on native or reconstituted 70S ribosomes in vitro. Probably functions indirectly by altering the affinity of the ribosome for aminoacyl-tRNA, thus increasing their reactivity as acceptors for peptidyl transferase. This Rhodopseudomonas palustris (strain BisA53) protein is Elongation factor P.